A 548-amino-acid polypeptide reads, in one-letter code: Chaperonin GroEL (548 aa).

ATP-binding positions include 29-32 (THGP), K50, 86-90 (DGTTT), G414, and D493.

The protein belongs to the chaperonin (HSP60) family. Forms a cylinder of 14 subunits composed of two heptameric rings stacked back-to-back. Interacts with the co-chaperonin GroES.

It localises to the cytoplasm. It catalyses the reaction ATP + H2O + a folded polypeptide = ADP + phosphate + an unfolded polypeptide.. Together with its co-chaperonin GroES, plays an essential role in assisting protein folding. The GroEL-GroES system forms a nano-cage that allows encapsulation of the non-native substrate proteins and provides a physical environment optimized to promote and accelerate protein folding. This Desulfatibacillum aliphaticivorans protein is Chaperonin GroEL.